Consider the following 320-residue polypeptide: Heterogeneous nuclear ribonucleoprotein A1 (320 aa).

Methionine 1 carries the N-acetylmethionine modification. An N-acetylserine; in Heterogeneous nuclear ribonucleoprotein A1, N-terminally processed modification is found at serine 2. Serine 2 carries the post-translational modification Phosphoserine. At lysine 3 the chain carries N6-acetyllysine; alternate. Lysine 3 participates in a covalent cross-link: Glycyl lysine isopeptide (Lys-Gly) (interchain with G-Cter in SUMO2); alternate. 2 positions are modified to phosphoserine: serine 4 and serine 6. The globular A domain stretch occupies residues 4–94 (SESPKEPEQL…EPKRAVSRED (91 aa)). Lysine 8 participates in a covalent cross-link: Glycyl lysine isopeptide (Lys-Gly) (interchain with G-Cter in SUMO2). RRM domains are found at residues 14–97 (RKLF…DSQR) and 105–184 (KKIF…LSKQ). At serine 22 the chain carries Phosphoserine. Lysine 78 participates in a covalent cross-link: Glycyl lysine isopeptide (Lys-Gly) (interchain with G-Cter in SUMO2). The globular B domain stretch occupies residues 95–185 (SQRPGAHLTV…EVRKALSKQE (91 aa)). Lysine 113 participates in a covalent cross-link: Glycyl lysine isopeptide (Lys-Gly) (interchain with G-Cter in SUMO). Glycyl lysine isopeptide (Lys-Gly) (interchain with G-Cter in SUMO2) cross-links involve residues lysine 179 and lysine 183. The disordered stretch occupies residues 182 to 216 (SKQEMASASSSQRGRSGSGNFGGGRGGGFGGNDNF). The residue at position 192 (serine 192) is a Phosphoserine; by MKNK2. Arginine 194 is modified (asymmetric dimethylarginine; alternate). Arginine 194 bears the Dimethylated arginine; alternate mark. Arginine 194 carries the post-translational modification Omega-N-methylarginine; alternate. The segment covering 197–216 (SGSGNFGGGRGGGFGGNDNF) has biased composition (gly residues). Residue serine 199 is modified to Phosphoserine. Arginine 206, arginine 218, arginine 225, and arginine 232 each carry asymmetric dimethylarginine; alternate. At arginine 206 the chain carries Dimethylated arginine; alternate. Omega-N-methylarginine; alternate is present on residues arginine 206, arginine 218, arginine 225, and arginine 232. The interval 218–240 (RGGNFSGRGGFGGSRGGGGYGGS) is RNA-binding RGG-box. Arginine 225 is modified (dimethylated arginine; alternate). Residues 268–305 (NQSSNFGPMKGGNFGGRSSGPYGGGGQYFAKPRNQGGY) are nuclear targeting sequence. Residues 274 to 320 (GPMKGGNFGGRSSGPYGGGGQYFAKPRNQGGYGGSSSSSSYGSGRRF) are disordered. Residues 276–294 (MKGGNFGGRSSGPYGGGGQ) are compositionally biased toward gly residues. Arginine 284 bears the Omega-N-methylarginine mark. Residue serine 285 is modified to Phosphoserine. Residue lysine 298 is modified to N6-acetyllysine; alternate. A Glycyl lysine isopeptide (Lys-Gly) (interchain with G-Cter in SUMO2); alternate cross-link involves residue lysine 298. An Omega-N-methylarginine modification is found at arginine 300. Over residues 308–320 (SSSSSSYGSGRRF) the composition is skewed to low complexity. Serine 309 carries the phosphoserine modification. Phosphoserine; by MKNK2 occurs at positions 310, 311, and 312. Phosphoserine is present on residues serine 313 and serine 316. An Omega-N-methylarginine modification is found at arginine 318.

Identified in the spliceosome C complex. Identified in a IGF2BP1-dependent mRNP granule complex containing untranslated mRNAs. Interacts with SEPT6. Interacts with C9orf72. Interacts with KHDRBS1. Interacts with UBQLN2. Interacts with PPIA/CYPA. Sumoylated.

It localises to the nucleus. Its subcellular location is the cytoplasm. Functionally, involved in the packaging of pre-mRNA into hnRNP particles, transport of poly(A) mRNA from the nucleus to the cytoplasm and modulation of splice site selection. Plays a role in the splicing of pyruvate kinase PKM by binding repressively to sequences flanking PKM exon 9, inhibiting exon 9 inclusion and resulting in exon 10 inclusion and production of the PKM M2 isoform. Binds to the IRES and thereby inhibits the translation of the apoptosis protease activating factor APAF1. May bind to specific miRNA hairpins. The protein is Heterogeneous nuclear ribonucleoprotein A1 (Hnrnpa1) of Mus musculus (Mouse).